Here is a 457-residue protein sequence, read N- to C-terminus: UDP-glycosyltransferase 708C2 (457 aa).

His32 acts as the Proton acceptor in catalysis. His32 contributes to the an anthocyanidin binding site. The Charge relay role is filled by Asp129. Thr150 lines the UDP-alpha-D-glucose pocket. The tract at residues 279–280 (NR) is UDP. Residues Val341, Gln343, His358, Trp361, Asn362, Ser363, and Glu366 each contribute to the UDP-alpha-D-glucose site. Gly381 contacts an anthocyanidin. Residues Asp382 and Gln383 each coordinate UDP-alpha-D-glucose.

The protein belongs to the UDP-glycosyltransferase family. As to expression, expressed in cotyledons. Not detected in flowers, leaves, roots and hypocotyls.

The catalysed reaction is a 3'-hydro-2'-hydroxy-beta-oxodihydrochalcone + UDP-alpha-D-glucose = a 3'-(beta-D-glucopyranosyl)-2'-hydroxy-beta-oxodihydrochalcone + UDP + H(+). Its function is as follows. UDP-glucose-dependent glucosyltransferase catalyzing the c-glucosylation of 2-hydroxyflavanones (2-hydroxynaringenin, 2-hydroxyeriodictyol and 2-hydroxypinocembrin) and phloretin. No activity with flavanones, flavones or flavonols. The sequence is that of UDP-glycosyltransferase 708C2 from Fagopyrum esculentum (Common buckwheat).